The primary structure comprises 142 residues: Malate dehydrogenase, mitochondrial (142 aa).

Residues Ala-1–Gly-6 and Asp-26 contribute to the NAD(+) site. Substrate contacts are provided by Arg-73 and Arg-79. Residues Asn-86 and Ile-109 to Asn-111 each bind NAD(+). Residue Asn-111 coordinates substrate.

Belongs to the LDH/MDH superfamily. MDH type 1 family. In terms of assembly, homodimer.

The protein localises to the mitochondrion matrix. It carries out the reaction (S)-malate + NAD(+) = oxaloacetate + NADH + H(+). This Schistosoma mansoni (Blood fluke) protein is Malate dehydrogenase, mitochondrial.